The chain runs to 265 residues: 4-hydroxy-tetrahydrodipicolinate reductase (265 aa).

NAD(+) is bound at residue 9-14 (GARGKM). Lysine 37 contributes to the NADP(+) binding site. Residues 99–101 (GTT) and 125–128 (APNF) each bind NAD(+). Histidine 155 acts as the Proton donor/acceptor in catalysis. Histidine 156 is a (S)-2,3,4,5-tetrahydrodipicolinate binding site. Catalysis depends on lysine 159, which acts as the Proton donor. Residue 165-166 (GT) coordinates (S)-2,3,4,5-tetrahydrodipicolinate.

The protein belongs to the DapB family.

The protein resides in the cytoplasm. The enzyme catalyses (S)-2,3,4,5-tetrahydrodipicolinate + NAD(+) + H2O = (2S,4S)-4-hydroxy-2,3,4,5-tetrahydrodipicolinate + NADH + H(+). The catalysed reaction is (S)-2,3,4,5-tetrahydrodipicolinate + NADP(+) + H2O = (2S,4S)-4-hydroxy-2,3,4,5-tetrahydrodipicolinate + NADPH + H(+). It participates in amino-acid biosynthesis; L-lysine biosynthesis via DAP pathway; (S)-tetrahydrodipicolinate from L-aspartate: step 4/4. In terms of biological role, catalyzes the conversion of 4-hydroxy-tetrahydrodipicolinate (HTPA) to tetrahydrodipicolinate. The chain is 4-hydroxy-tetrahydrodipicolinate reductase from Lysinibacillus sphaericus (strain C3-41).